The chain runs to 372 residues: Isoliquiritigenin 2'-O-methyltransferase (372 aa).

S-adenosyl-L-methionine-binding residues include G217, D240, D260, M261, and K274. H278 (proton acceptor) is an active-site residue.

Belongs to the class I-like SAM-binding methyltransferase superfamily. Cation-independent O-methyltransferase family. COMT subfamily. As to quaternary structure, monomer. Homodimer. In terms of tissue distribution, roots (at protein level). Expressed mainly in roots, and to a lesser extent in root nodules. In the roots, expression is not detected in the root tip or the cells immediately behind the tip, but is detected in tissues starting 1.5-2.0 mm distal to the root tip. Detected in the epidermal and cortical cells of 2 day old roots, with lower levels in vascular tissue.

It catalyses the reaction isoliquiritigenin + S-adenosyl-L-methionine = 2'-O-methylisoliquiritigenin + S-adenosyl-L-homocysteine + H(+). The catalysed reaction is licodione + S-adenosyl-L-methionine = 2'-O-methyllicodione + S-adenosyl-L-homocysteine + H(+). Its activity is regulated as follows. Inhibited by 1 mM Co(2+), Cu(2+), Zn(2+) or Fe(2+). Non-competitively inhibited by S-adenosyl-L-homocysteine. Competitively inhibited by 2'-O-methylisoliquiritigenin. Its function is as follows. Methylates the 2'-hydroxyl of isoliquiritigenin and licodione. Does not methylate narigenin chalcone, caffeic acid or daidzein. Involved in the root nodulation initiation by promoting the biosynthesis of nod-inducing molecules. This chain is Isoliquiritigenin 2'-O-methyltransferase, found in Medicago sativa (Alfalfa).